The sequence spans 272 residues: Ethanolamine ammonia-lyase small subunit (272 aa).

Valine 161, glutamate 182, and cysteine 211 together coordinate adenosylcob(III)alamin.

This sequence belongs to the EutC family. In terms of assembly, the basic unit is a heterodimer which dimerizes to form tetramers. The heterotetramers trimerize; 6 large subunits form a core ring with 6 small subunits projecting outwards. The cofactor is adenosylcob(III)alamin.

It is found in the bacterial microcompartment. The catalysed reaction is ethanolamine = acetaldehyde + NH4(+). It functions in the pathway amine and polyamine degradation; ethanolamine degradation. Functionally, catalyzes the deamination of various vicinal amino-alcohols to oxo compounds. Allows this organism to utilize ethanolamine as the sole source of nitrogen and carbon in the presence of external vitamin B12. The sequence is that of Ethanolamine ammonia-lyase small subunit from Xanthomonas campestris pv. campestris (strain B100).